Reading from the N-terminus, the 607-residue chain is Arginine--tRNA ligase, cytoplasmic (607 aa).

The residue at position 2 (A2) is an N-acetylalanine. Position 15 is a phosphoserine (S15). Interaction with tRNA stretches follow at residues 59–60 (EW) and 106–111 (NGPFIQ). Residues 148–153 (EFSSPN), H162, Y347, D351, and Q375 each bind L-arginine. A 'HIGH' region motif is present at residues 151–162 (SPNIAKPFHAGH). The interaction with tRNA stretch occupies residues 484–498 (DTGPYLQYAHSRLRS).

It belongs to the class-I aminoacyl-tRNA synthetase family. As to quaternary structure, monomer.

The protein localises to the cytoplasm. The protein resides in the cytosol. The enzyme catalyses tRNA(Arg) + L-arginine + ATP = L-arginyl-tRNA(Arg) + AMP + diphosphate. In terms of biological role, forms part of a macromolecular complex that catalyzes the attachment of specific amino acids to cognate tRNAs during protein synthesis. The protein is Arginine--tRNA ligase, cytoplasmic of Saccharomyces cerevisiae (strain ATCC 204508 / S288c) (Baker's yeast).